The following is a 250-amino-acid chain: 5'-nucleotidase SurE (250 aa).

The a divalent metal cation site is built by Asp9, Asp10, Ser40, and Asn92.

The protein belongs to the SurE nucleotidase family. Requires a divalent metal cation as cofactor.

It is found in the cytoplasm. The enzyme catalyses a ribonucleoside 5'-phosphate + H2O = a ribonucleoside + phosphate. In terms of biological role, nucleotidase that shows phosphatase activity on nucleoside 5'-monophosphates. The chain is 5'-nucleotidase SurE from Idiomarina loihiensis (strain ATCC BAA-735 / DSM 15497 / L2-TR).